The sequence spans 356 residues: S-adenosylmethionine:tRNA ribosyltransferase-isomerase (356 aa).

It belongs to the QueA family. As to quaternary structure, monomer.

It is found in the cytoplasm. The enzyme catalyses 7-aminomethyl-7-carbaguanosine(34) in tRNA + S-adenosyl-L-methionine = epoxyqueuosine(34) in tRNA + adenine + L-methionine + 2 H(+). Its pathway is tRNA modification; tRNA-queuosine biosynthesis. Functionally, transfers and isomerizes the ribose moiety from AdoMet to the 7-aminomethyl group of 7-deazaguanine (preQ1-tRNA) to give epoxyqueuosine (oQ-tRNA). In Escherichia coli (strain UTI89 / UPEC), this protein is S-adenosylmethionine:tRNA ribosyltransferase-isomerase.